A 550-amino-acid chain; its full sequence is Warthog protein 8 (550 aa).

The N-terminal stretch at 1-19 is a signal peptide; that stretch reads MNYLLLVSGLLSVWQPVFG.

The protein belongs to the hedgehog family. Post-translationally, the C-terminal domain displays an autoproteolysis activity.

It is found in the secreted. The protein resides in the cell surface. It localises to the cell membrane. The protein localises to the extracellular space. Intercellular signal essential for a variety of patterning events during development. The sequence is that of Warthog protein 8 (wrt-8) from Caenorhabditis elegans.